Consider the following 493-residue polypeptide: Lysine--tRNA ligase (493 aa).

Mg(2+)-binding residues include E406 and E413.

Belongs to the class-II aminoacyl-tRNA synthetase family. In terms of assembly, homodimer. Mg(2+) is required as a cofactor.

The protein localises to the cytoplasm. It catalyses the reaction tRNA(Lys) + L-lysine + ATP = L-lysyl-tRNA(Lys) + AMP + diphosphate. The sequence is that of Lysine--tRNA ligase from Leuconostoc citreum (strain KM20).